The sequence spans 395 residues: MPGGMMADLEAFRKAQRADGPATILAIGTATPPNAVDQSTYPDYYFKITNSEHMTELKEKFRRMCDKSGIKKRYMYLTEEILNENPSVCAYMAPSLDARQDMVVVEVPRLGKEAAAKAIKEWGQPKSKITHVIFCTTSGVDMPGADYQMTKLLGLRPSVKRVMMYQQGCFAGGTVLRVAKDLAENNRGARVLVVCSEITAVTFRGPSDTHLDSMVGQALFGDGARALIVGADPVPEVEKPCFEMLWTAQTILPDSDGAIDGHLREVGLTFHLLKDVPGLISKNIEKSLVEAFQQFGISDWNQLFWIAHPGGPAILDQVEAKLNLDPKKLRATRQVLSEYGNMSSACVHFILDEMRKSSQQNGCSTTGEGLDVGVLFGFGPGLTVETVVLKSVPLQ.

The active site involves Cys-169.

This sequence belongs to the thiolase-like superfamily. Chalcone/stilbene synthases family.

It carries out the reaction (E)-4-coumaroyl-CoA + 3 malonyl-CoA + 3 H(+) = 2',4,4',6'-tetrahydroxychalcone + 3 CO2 + 4 CoA. It functions in the pathway secondary metabolite biosynthesis; flavonoid biosynthesis. Its function is as follows. The primary product of this enzyme is 4,2',4',6'-tetrahydroxychalcone (also termed naringenin-chalcone or chalcone) which can under specific conditions spontaneously isomerize into naringenin. The chain is Chalcone synthase (CHS) from Pinus strobus (Eastern white pine).